The sequence spans 332 residues: Biotin synthase (332 aa).

The region spanning 53 to 282 (HFGKKVKLNM…TKEIRISGGR (230 aa)) is the Radical SAM core domain. Residues C71, C75, and C78 each coordinate [4Fe-4S] cluster. C115, C147, C207, and R277 together coordinate [2Fe-2S] cluster.

This sequence belongs to the radical SAM superfamily. Biotin synthase family. In terms of assembly, homodimer. [4Fe-4S] cluster serves as cofactor. [2Fe-2S] cluster is required as a cofactor.

It catalyses the reaction (4R,5S)-dethiobiotin + (sulfur carrier)-SH + 2 reduced [2Fe-2S]-[ferredoxin] + 2 S-adenosyl-L-methionine = (sulfur carrier)-H + biotin + 2 5'-deoxyadenosine + 2 L-methionine + 2 oxidized [2Fe-2S]-[ferredoxin]. The protein operates within cofactor biosynthesis; biotin biosynthesis; biotin from 7,8-diaminononanoate: step 2/2. Catalyzes the conversion of dethiobiotin (DTB) to biotin by the insertion of a sulfur atom into dethiobiotin via a radical-based mechanism. This chain is Biotin synthase, found in Bacillus cereus (strain ATCC 10987 / NRS 248).